A 198-amino-acid chain; its full sequence is Chorion protein S19 (198 aa).

The first 16 residues, 1-16 (MNKFATLAVFISVCLA), serve as a signal peptide directing secretion.

The protein belongs to the chorion protein S19 family.

The protein resides in the secreted. Chorion membrane (egg shell) protein; plays a role in protecting the egg from the environment. This chain is Chorion protein S19 (Cp19), found in Drosophila virilis (Fruit fly).